The primary structure comprises 380 residues: Cytochrome b (380 aa).

A run of 4 helical transmembrane segments spans residues 33 to 53, 77 to 98, 113 to 133, and 178 to 198; these read FGSLLGICLMVQIITGLFLAM, WLIRYAHANGASMFFICLFIHV, WNIGIILLLTTMATAFVGYVL, and FFAFHFILPFIITALVLVHLL. Residues histidine 83 and histidine 97 each coordinate heme b. Heme b contacts are provided by histidine 182 and histidine 196. Histidine 201 lines the a ubiquinone pocket. Transmembrane regions (helical) follow at residues 226–246, 288–308, 320–340, and 347–367; these read IKDILGVLLLLMVLMFLVLFF, LGGVLALLLSILILAAFPLLN, ITQTLYWIFVANLLILTWIGG, and FTTIGQISSIMYFMIIVIFMP.

It belongs to the cytochrome b family. As to quaternary structure, the cytochrome bc1 complex contains 11 subunits: 3 respiratory subunits (MT-CYB, CYC1 and UQCRFS1), 2 core proteins (UQCRC1 and UQCRC2) and 6 low-molecular weight proteins (UQCRH/QCR6, UQCRB/QCR7, UQCRQ/QCR8, UQCR10/QCR9, UQCR11/QCR10 and a cleavage product of UQCRFS1). This cytochrome bc1 complex then forms a dimer. It depends on heme b as a cofactor.

Its subcellular location is the mitochondrion inner membrane. Component of the ubiquinol-cytochrome c reductase complex (complex III or cytochrome b-c1 complex) that is part of the mitochondrial respiratory chain. The b-c1 complex mediates electron transfer from ubiquinol to cytochrome c. Contributes to the generation of a proton gradient across the mitochondrial membrane that is then used for ATP synthesis. The sequence is that of Cytochrome b (MT-CYB) from Microryzomys minutus (Forest small rice rat).